Reading from the N-terminus, the 159-residue chain is Globin-like protein (159 aa).

The Globin domain maps to 1-152; it reads MSMNRQEISD…FNAESQTHLK (152 aa). A heme-binding site is contributed by His-101.

Belongs to the globin family. Homodimer. Expressed mainly in a subset of neuronal cells and in head muscular tissue.

Its subcellular location is the cytoplasm. In terms of biological role, may be a globin and may play a role in oxygen transport. This Caenorhabditis elegans protein is Globin-like protein (glb-1).